The following is a 155-amino-acid chain: Cytochrome c-type biogenesis protein CcmE (155 aa).

Topologically, residues 1–8 (MNPVRKRR) are cytoplasmic. The helical; Signal-anchor for type II membrane protein transmembrane segment at 9–29 (LFIVLAILAGVGAAVALALSA) threads the bilayer. Topologically, residues 30 to 155 (LQQNINLFYT…YENGKPGGAQ (126 aa)) are periplasmic. Heme is bound by residues His124 and Tyr128.

It belongs to the CcmE/CycJ family.

The protein localises to the cell inner membrane. In terms of biological role, heme chaperone required for the biogenesis of c-type cytochromes. Transiently binds heme delivered by CcmC and transfers the heme to apo-cytochromes in a process facilitated by CcmF and CcmH. This Azotobacter vinelandii (strain DJ / ATCC BAA-1303) protein is Cytochrome c-type biogenesis protein CcmE.